Consider the following 92-residue polypeptide: Small ribosomal subunit protein uS19 (92 aa).

It belongs to the universal ribosomal protein uS19 family.

In terms of biological role, protein S19 forms a complex with S13 that binds strongly to the 16S ribosomal RNA. The protein is Small ribosomal subunit protein uS19 of Streptococcus pyogenes serotype M49 (strain NZ131).